A 401-amino-acid chain; its full sequence is Glucose-6-phosphate isomerase (401 aa).

Glu261 serves as the catalytic Proton donor. Residues His282 and Lys392 contribute to the active site.

Belongs to the GPI family. In terms of assembly, homodimer.

It localises to the cytoplasm. The enzyme catalyses alpha-D-glucose 6-phosphate = beta-D-fructose 6-phosphate. The protein operates within carbohydrate biosynthesis; gluconeogenesis. It functions in the pathway carbohydrate degradation; glycolysis; D-glyceraldehyde 3-phosphate and glycerone phosphate from D-glucose: step 2/4. With respect to regulation, competively inhibited by 6-phosphogluconate and erythrose 4-phosphate. Functionally, catalyzes the isomerization of glucose-6-P to fructose-6-P. The sequence is that of Glucose-6-phosphate isomerase from Methanocaldococcus jannaschii (strain ATCC 43067 / DSM 2661 / JAL-1 / JCM 10045 / NBRC 100440) (Methanococcus jannaschii).